A 513-amino-acid polypeptide reads, in one-letter code: NAD(P)H-quinone oxidoreductase subunit 2 (513 aa).

14 consecutive transmembrane segments (helical) span residues 12-32 (TLWP…VDLI), 41-61 (LPYL…PMWI), 77-97 (LSVV…LMSV), 104-124 (SLAT…AMLL), 130-150 (MAMI…LSGY), 165-185 (LLIG…LYGF), 199-219 (IVNL…GICF), 238-258 (PTPV…ALAI), 272-292 (WQTL…VVAI), 300-320 (MLAY…AIGT), 328-348 (ILYI…VVLF), 372-392 (LVLS…GFFG), 394-414 (LYLF…FGLV), and 456-476 (AGML…PPLI). Positions 494–505 (TATPVSRVSTGA) are enriched in polar residues. Residues 494–513 (TATPVSRVSTGAQAPADHGR) are disordered.

It belongs to the complex I subunit 2 family. As to quaternary structure, NDH-1 can be composed of about 15 different subunits; different subcomplexes with different compositions have been identified which probably have different functions.

The protein resides in the cell inner membrane. It catalyses the reaction a plastoquinone + NADH + (n+1) H(+)(in) = a plastoquinol + NAD(+) + n H(+)(out). The catalysed reaction is a plastoquinone + NADPH + (n+1) H(+)(in) = a plastoquinol + NADP(+) + n H(+)(out). Its function is as follows. NDH-1 shuttles electrons from an unknown electron donor, via FMN and iron-sulfur (Fe-S) centers, to quinones in the respiratory and/or the photosynthetic chain. The immediate electron acceptor for the enzyme in this species is believed to be plastoquinone. Couples the redox reaction to proton translocation, and thus conserves the redox energy in a proton gradient. Cyanobacterial NDH-1 also plays a role in inorganic carbon-concentration. The sequence is that of NAD(P)H-quinone oxidoreductase subunit 2 from Gloeobacter violaceus (strain ATCC 29082 / PCC 7421).